The sequence spans 388 residues: G2/mitotic-specific cyclin-B2 (388 aa).

The tract at residues 46–67 (ATNGKVGPSKKPSKASCVQKPK) is disordered.

Belongs to the cyclin family. Cyclin AB subfamily. In terms of assembly, interacts with the CDK1 protein kinase to form a serine/threonine kinase holoenzyme complex also known as maturation promoting factor (MPF). The cyclin subunit imparts substrate specificity to the complex.

In terms of biological role, essential for the control of the cell cycle at the G2/M (mitosis) transition. The protein is G2/mitotic-specific cyclin-B2 (ccnb2) of Oryzias curvinotus (Hynann ricefish).